Reading from the N-terminus, the 340-residue chain is MVEQIKDKLGRPIRDLRLSVTDRCNFRCDYCMPKEVFGDDFVFLPKNELLTFDEMARIAKVYAELGVKKIRITGGEPLMRRDLDVLIAKLNQIDGIEDIGLTTNGLLLKKHGQELYDAGLRRINVSLDAIDDTLFQSINNRNIKATTILEQIDYATSIGLNVKVNVVIQKGINDDQIIPMLEYFKDKHIEIRFIEFMDVGNDNGWDFSKVVTKDEMLTMIEQHFEIDPVEPKYFGEVAKYYRHKDNGVQFGLITSVSQSFCSTCTRARLSSDGKFYGCLFATVDGFNVKAFIRSGVTDEELKEQFKALWQIRDDRYSDERTAQTVANRQRKKINMNYIGG.

The Radical SAM core domain maps to 8 to 227; sequence KLGRPIRDLR…TMIEQHFEID (220 aa). Arg-17 serves as a coordination point for GTP. Positions 24 and 28 each coordinate [4Fe-4S] cluster. Residue Tyr-30 coordinates S-adenosyl-L-methionine. Cys-31 is a [4Fe-4S] cluster binding site. Arg-71 provides a ligand contact to GTP. An S-adenosyl-L-methionine-binding site is contributed by Gly-75. Thr-102 is a binding site for GTP. Ser-126 contributes to the S-adenosyl-L-methionine binding site. Lys-163 serves as a coordination point for GTP. Met-197 lines the S-adenosyl-L-methionine pocket. Residues Cys-261 and Cys-264 each contribute to the [4Fe-4S] cluster site. 266-268 lines the GTP pocket; sequence RAR. Cys-278 lines the [4Fe-4S] cluster pocket.

This sequence belongs to the radical SAM superfamily. MoaA family. Monomer and homodimer. [4Fe-4S] cluster serves as cofactor.

The catalysed reaction is GTP + AH2 + S-adenosyl-L-methionine = (8S)-3',8-cyclo-7,8-dihydroguanosine 5'-triphosphate + 5'-deoxyadenosine + L-methionine + A + H(+). It functions in the pathway cofactor biosynthesis; molybdopterin biosynthesis. Functionally, catalyzes the cyclization of GTP to (8S)-3',8-cyclo-7,8-dihydroguanosine 5'-triphosphate. The protein is GTP 3',8-cyclase of Staphylococcus aureus (strain Mu3 / ATCC 700698).